A 433-amino-acid polypeptide reads, in one-letter code: Legumain (433 aa).

A signal peptide spans Met1–Ala17. Residues Val18–Asp25 constitute a propeptide that is removed on maturation. The N-linked (GlcNAc...) asparagine glycan is linked to Asn91. His148 is an active-site residue. An N-linked (GlcNAc...) asparagine glycan is attached at Asn167. Catalysis depends on Cys189, which acts as the Nucleophile. Residues Asn263 and Asn272 are each glycosylated (N-linked (GlcNAc...) asparagine). A propeptide spanning residues Asp324–Tyr433 is cleaved from the precursor. 2 cysteine pairs are disulfide-bonded: Cys378-Cys412 and Cys390-Cys429.

It belongs to the peptidase C13 family. In terms of assembly, homodimer before autocatalytic removal of the propeptide. Monomer after autocatalytic processing. May interact with integrins. Activated by autocatalytic processing at pH 4. As to expression, detected in kidney (at protein level).

The protein localises to the lysosome. It carries out the reaction Hydrolysis of proteins and small molecule substrates at -Asn-|-Xaa- bonds.. Its function is as follows. Has a strict specificity for hydrolysis of asparaginyl bonds. Can also cleave aspartyl bonds slowly, especially under acidic conditions. Involved in the processing of proteins for MHC class II antigen presentation in the lysosomal/endosomal system. Also involved in MHC class I antigen presentation in cross-presenting dendritic cells by mediating cleavage and maturation of Perforin-2 (MPEG1), thereby promoting antigen translocation in the cytosol. Required for normal lysosomal protein degradation in renal proximal tubules. Required for normal degradation of internalized EGFR. Plays a role in the regulation of cell proliferation via its role in EGFR degradation. The polypeptide is Legumain (LGMN) (Bos taurus (Bovine)).